A 380-amino-acid polypeptide reads, in one-letter code: MTRAGLSPLAWLDEVETQRRAAGLRRSLRARPPVGTVLDLASNDYLGLSQHPRVIDGGVAALRTWGAGATGSRLVTGNTELHEQFEDALASFVGADSALVFSSGYTANLGAVVALSGPGSLLVSDAYTHASLVDACRLSRARVVVTPHNDVAAVARALATRDEERAVVVTDSVFSADGDLAPLRELHDACRRHGALMIVDEAHGLGVRGDRGRGLLDEVGLAGAPDVVMTTTLSKALGSQGGVVLGPAAVRDHLIDAARPFIFDTGLAPAAVGAAHAALQVLVEEPWRAQRVLDHATTLAQICGVADVPSSAVVSVILGEPEVALAAAMGCLERGVRVGCFRPPTVPAGTSRLRLTARASLSDDEMALAREVLTDVLSRA.

Arginine 26 contributes to the substrate binding site. 104–105 (GY) is a binding site for pyridoxal 5'-phosphate. Residue histidine 129 coordinates substrate. Residues serine 175, 200-203 (DEAH), and 232-235 (TLSK) each bind pyridoxal 5'-phosphate. Lysine 235 is subject to N6-(pyridoxal phosphate)lysine. Threonine 345 contacts substrate.

Belongs to the class-II pyridoxal-phosphate-dependent aminotransferase family. BioF subfamily. Homodimer. Requires pyridoxal 5'-phosphate as cofactor.

It catalyses the reaction 6-carboxyhexanoyl-[ACP] + L-alanine + H(+) = (8S)-8-amino-7-oxononanoate + holo-[ACP] + CO2. The protein operates within cofactor biosynthesis; biotin biosynthesis. Its function is as follows. Catalyzes the decarboxylative condensation of pimeloyl-[acyl-carrier protein] and L-alanine to produce 8-amino-7-oxononanoate (AON), [acyl-carrier protein], and carbon dioxide. In Mycolicibacterium gilvum (strain PYR-GCK) (Mycobacterium gilvum (strain PYR-GCK)), this protein is 8-amino-7-oxononanoate synthase.